The chain runs to 432 residues: Glucose-6-phosphate isomerase (432 aa).

The active-site Proton donor is the Glu-283. Catalysis depends on residues His-304 and Lys-418.

It belongs to the GPI family.

The protein localises to the cytoplasm. It catalyses the reaction alpha-D-glucose 6-phosphate = beta-D-fructose 6-phosphate. Its pathway is carbohydrate biosynthesis; gluconeogenesis. The protein operates within carbohydrate degradation; glycolysis; D-glyceraldehyde 3-phosphate and glycerone phosphate from D-glucose: step 2/4. In terms of biological role, catalyzes the reversible isomerization of glucose-6-phosphate to fructose-6-phosphate. This is Glucose-6-phosphate isomerase from Rubrobacter xylanophilus (strain DSM 9941 / JCM 11954 / NBRC 16129 / PRD-1).